Consider the following 333-residue polypeptide: Taste receptor type 2 member 38 (333 aa).

Residues 1–17 (MLTLTRICTVSYEVRST) are Extracellular-facing. The chain crosses the membrane as a helical span at residues 18-38 (FLFISVLEFAVGFLTNAFIFL). The Cytoplasmic portion of the chain corresponds to 39–55 (VNFWDVVKRQPLSNSDC). Residues 56–76 (VLLCLSISRLFLHGLLFLSAI) traverse the membrane as a helical segment. At 77-94 (QLTHFQKLSEPLNHSYHA) the chain is on the extracellular side. The helical transmembrane segment at 95-115 (IIMLWMIANQANLWLATCLSL) threads the bilayer. Residues 116 to 142 (LYCSKLIRSSHTFLICLASWVSRKICQ) lie on the Cytoplasmic side of the membrane. Residues 143–163 (MLLGIILCSCICTVLCVWCYF) traverse the membrane as a helical segment. Topologically, residues 164 to 190 (SRPHFTVTTVLFTNNNTRLNWQIKDLN) are extracellular. N178 carries N-linked (GlcNAc...) asparagine glycosylation. A helical transmembrane segment spans residues 191–211 (LFYSFLFCYLWSVPPFLLFLV). The Cytoplasmic portion of the chain corresponds to 212 to 251 (SSGMLTVSLGRHMRTMKVYTRDFRDPSLEAHIKALKSLVS). Residues 252 to 272 (FFCFFVISSCAAFISVPLLIL) form a helical membrane-spanning segment. Residues 273–276 (WRDK) are Extracellular-facing. Residues 277 to 297 (IGVMVCVGIMAACPSGHAAIL) traverse the membrane as a helical segment. Residues 298-333 (ISGNAKLRRAVTTILLWAQSSLKVRADHKADSRTLC) are Cytoplasmic-facing.

It belongs to the G-protein coupled receptor T2R family.

The protein resides in the membrane. Functionally, receptor that may play a role in the perception of bitterness and is gustducin-linked. May play a role in sensing the chemical composition of the gastrointestinal content. The activity of this receptor may stimulate alpha gustducin, mediate PLC-beta-2 activation and lead to the gating of TRPM5. This chain is Taste receptor type 2 member 38 (TAS2R38), found in Hylobates klossii (Kloss's gibbon).